A 525-amino-acid chain; its full sequence is Neuropilin and tolloid-like protein 2 (525 aa).

An N-terminal signal peptide occupies residues methionine 1–glycine 22. At isoleucine 23 to histidine 347 the chain is on the extracellular side. 7 cysteine pairs are disulfide-bonded: cysteine 45-cysteine 72, cysteine 100-cysteine 122, cysteine 177-cysteine 207, cysteine 234-cysteine 256, cysteine 297-cysteine 309, cysteine 304-cysteine 322, and cysteine 316-cysteine 331. CUB domains follow at residues cysteine 45–isoleucine 159 and cysteine 177–phenylalanine 292. The LDL-receptor class A domain occupies proline 296–lysine 332. Asparagine 311 carries an N-linked (GlcNAc...) asparagine glycan. Residues glycine 348–valine 368 form a helical membrane-spanning segment. Residues glutamine 369–phenylalanine 525 are Cytoplasmic-facing. Serine 409 carries the phosphoserine modification.

In terms of assembly, interacts with GRIK2 and GRIK3, but neither with AMPA-nor with NMDA-sensitive glutamate receptors. Post-translationally, N-glycosylated. As to expression, expressed in brain tissues, including cerebellar granule cells (at protein level).

It localises to the cell membrane. Accessory subunit of neuronal kainate-sensitive glutamate receptors, GRIK2 and GRIK3. Increases kainate-receptor channel activity, slowing the decay kinetics of the receptors, without affecting their expression at the cell surface, and increasing the open probability of the receptor channels. Modulates the agonist sensitivity of kainate receptors. Slows the decay of kainate receptor-mediated excitatory postsynaptic currents (EPSCs), thus directly influencing synaptic transmission. The protein is Neuropilin and tolloid-like protein 2 (Neto2) of Mus musculus (Mouse).